Here is a 548-residue protein sequence, read N- to C-terminus: T-complex protein 1 subunit theta (548 aa).

Ala2 carries the post-translational modification N-acetylalanine. Ser23 is modified (phosphoserine). Phosphotyrosine is present on Tyr30. The ADP site is built by Tyr47 and Gly48. Asp99 serves as a coordination point for Mg(2+). The ADP site is built by Gly100, Thr101, Asn102, and Phe103. Residues Gly100, Thr101, and Asn102 each coordinate ATP. A Phosphoserine modification is found at Ser162. 3 residues coordinate ADP: Met169, Ser170, and Lys171. The ATP site is built by Ser170 and Lys171. Ser213 is subject to Phosphoserine. Glycyl lysine isopeptide (Lys-Gly) (interchain with G-Cter in SUMO2) cross-links involve residues Lys224, Lys254, and Lys260. Phosphoserine occurs at positions 269 and 317. N6-acetyllysine occurs at positions 318 and 400. Position 412 (Gly412) interacts with ADP. Position 412 (Gly412) interacts with ATP. Lys459 is covalently cross-linked (Glycyl lysine isopeptide (Lys-Gly) (interchain with G-Cter in SUMO1)). Lys466 bears the N6-acetyllysine mark. Asp499 is an ADP binding site. Residues Asp499 and Lys504 each coordinate ATP. At Tyr505 the chain carries Phosphotyrosine. A disordered region spans residues 529–548; that stretch reads PAGGPKPPSGKKDWDDDQND. Lys534 participates in a covalent cross-link: Glycyl lysine isopeptide (Lys-Gly) (interchain with G-Cter in SUMO2). Phosphoserine is present on Ser537. Lys539 participates in a covalent cross-link: Glycyl lysine isopeptide (Lys-Gly) (interchain with G-Cter in SUMO2).

Belongs to the TCP-1 chaperonin family. As to quaternary structure, component of the chaperonin-containing T-complex (TRiC), a hexadecamer composed of two identical back-to-back stacked rings enclosing a protein folding chamber. Each ring is made up of eight different subunits: TCP1/CCT1, CCT2, CCT3, CCT4, CCT5, CCT6A/CCT6, CCT7, CCT8. Interacts with PACRG. Interacts with DNAAF4. Interacts with synaptic plasticity regulator PANTS.

It localises to the cytoplasm. The protein resides in the cytoskeleton. Its subcellular location is the microtubule organizing center. The protein localises to the centrosome. It is found in the cilium basal body. It carries out the reaction ATP + H2O = ADP + phosphate + H(+). Component of the chaperonin-containing T-complex (TRiC), a molecular chaperone complex that assists the folding of actin, tubulin and other proteins upon ATP hydrolysis. The TRiC complex mediates the folding of WRAP53/TCAB1, thereby regulating telomere maintenance. As part of the TRiC complex may play a role in the assembly of BBSome, a complex involved in ciliogenesis regulating transports vesicles to the cilia. The protein is T-complex protein 1 subunit theta (CCT8) of Macaca fascicularis (Crab-eating macaque).